The primary structure comprises 274 residues: Dermonecrotic toxin LarSicTox-alphaIB2bii (274 aa).

Residue His3 is part of the active site. Glu23 and Asp25 together coordinate Mg(2+). His39 functions as the Nucleophile in the catalytic mechanism. Cystine bridges form between Cys43–Cys49 and Cys45–Cys188. Position 83 (Asp83) interacts with Mg(2+). Asn251 carries N-linked (GlcNAc...) asparagine glycosylation.

The protein belongs to the arthropod phospholipase D family. Class II subfamily. The cofactor is Mg(2+). In terms of tissue distribution, expressed by the venom gland.

Its subcellular location is the secreted. The catalysed reaction is an N-(acyl)-sphingosylphosphocholine = an N-(acyl)-sphingosyl-1,3-cyclic phosphate + choline. The enzyme catalyses an N-(acyl)-sphingosylphosphoethanolamine = an N-(acyl)-sphingosyl-1,3-cyclic phosphate + ethanolamine. It catalyses the reaction a 1-acyl-sn-glycero-3-phosphocholine = a 1-acyl-sn-glycero-2,3-cyclic phosphate + choline. It carries out the reaction a 1-acyl-sn-glycero-3-phosphoethanolamine = a 1-acyl-sn-glycero-2,3-cyclic phosphate + ethanolamine. Dermonecrotic toxins cleave the phosphodiester linkage between the phosphate and headgroup of certain phospholipids (sphingolipid and lysolipid substrates), forming an alcohol (often choline) and a cyclic phosphate. This toxin acts on sphingomyelin (SM). It may also act on ceramide phosphoethanolamine (CPE), lysophosphatidylcholine (LPC) and lysophosphatidylethanolamine (LPE), but not on lysophosphatidylserine (LPS), and lysophosphatidylglycerol (LPG). It acts by transphosphatidylation, releasing exclusively cyclic phosphate products as second products. Induces dermonecrosis, hemolysis, increased vascular permeability, edema, inflammatory response, and platelet aggregation. The polypeptide is Dermonecrotic toxin LarSicTox-alphaIB2bii (Loxosceles arizonica (Arizona brown spider)).